Here is a 500-residue protein sequence, read N- to C-terminus: Glycerol kinase (500 aa).

T13 is a binding site for ADP. ATP is bound by residues T13, T14, and S15. T13 is a binding site for sn-glycerol 3-phosphate. An ADP-binding site is contributed by R17. The sn-glycerol 3-phosphate site is built by R83, E84, Y135, and D244. 5 residues coordinate glycerol: R83, E84, Y135, D244, and Q245. T266 and G309 together coordinate ADP. ATP-binding residues include T266, G309, Q313, and G410. 2 residues coordinate ADP: G410 and N414.

It belongs to the FGGY kinase family.

The enzyme catalyses glycerol + ATP = sn-glycerol 3-phosphate + ADP + H(+). It functions in the pathway polyol metabolism; glycerol degradation via glycerol kinase pathway; sn-glycerol 3-phosphate from glycerol: step 1/1. Its activity is regulated as follows. Inhibited by fructose 1,6-bisphosphate (FBP). In terms of biological role, key enzyme in the regulation of glycerol uptake and metabolism. Catalyzes the phosphorylation of glycerol to yield sn-glycerol 3-phosphate. The polypeptide is Glycerol kinase (Burkholderia pseudomallei (strain K96243)).